The primary structure comprises 98 residues: Large ribosomal subunit protein uL23 (98 aa).

The protein belongs to the universal ribosomal protein uL23 family. Part of the 50S ribosomal subunit. Contacts protein L29, and trigger factor when it is bound to the ribosome.

One of the early assembly proteins it binds 23S rRNA. One of the proteins that surrounds the polypeptide exit tunnel on the outside of the ribosome. Forms the main docking site for trigger factor binding to the ribosome. This chain is Large ribosomal subunit protein uL23, found in Rickettsia africae (strain ESF-5).